The following is a 325-amino-acid chain: Prenytransferase adrG (325 aa).

7 consecutive transmembrane segments (helical) span residues 47–67 (LVGVAFSASISSTKIPIAVLL), 71–91 (MLLSIWSIFLRSAGCVWDDLI), 117–137 (ALLLTVALFACGGTVLIFLPW), 163–183 (PQITLMNIGWAVPMAMHSLGL), 189–209 (MTPTVCMFLFIGSVIIMIDVI), 236–256 (LLSYSLLCASTGFLAMAGVLT), and 258–278 (LGLPFFVLSVGGHFCGFWVLL).

This sequence belongs to the UbiA prenyltransferase family. The cofactor is Mg(2+).

The protein localises to the membrane. The catalysed reaction is 3,5-dimethylorsellinate + (2E,6E)-farnesyl diphosphate = (3R)-3-farnesyl-6-hydroxy-2,3,5-trimethyl-4-oxocyclohexa-1,5-diene-1-carboxylate + diphosphate + H(+). The protein operates within secondary metabolite biosynthesis; terpenoid biosynthesis. Functionally, prenytransferase; part of the gene cluster that mediates the biosynthesis of andrastins, meroterpenoid compounds that exhibit inhibitory activity against ras farnesyltransferase, suggesting that they could be promising leads for antitumor agents. The first step of the pathway is the synthesis of 3,5-dimethylorsellinic acid (DMOA) by the polyketide synthase adrD via condensation of one acetyl-CoA starter unit with 3 malonyl-CoA units and 2 methylations. DMAO is then converted to farnesyl-DMAO by the prenyltransferase adrG. The methyltransferase adrK catalyzes the methylation of the carboxyl group of farnesyl-DMAO to farnesyl-DMAO methyl ester which is further converted to epoxyfarnesyl-DMAO methyl ester by the FAD-dependent monooxygenase adrH. The terpene cyclase adrI then catalyzes the carbon skeletal rearrangement to generate the andrastin E, the first compound in the pathway having the andrastin scaffold, with the tetracyclic ring system. The post-cyclization tailoring enzymes adrF, adrE, adrJ, and adrA, are involved in the conversion of andrastin E into andrastin A. The short chain dehydrogenase adrF is responsible for the oxidation of the C-3 a hydroxyl group of andrastin E to yield the corresponding ketone, andrastin D. The ketoreductase adrE stereoselectively reduces the carbonyl moiety to reverse the stereochemistry of the C-3 position to yield andrastin F. The acetyltransferase adrJ is the acetyltransferase that attaches the acetyl group to the C-3 hydroxyl group of andrastin F to yield andrastin C. Finally, the cytochrome P450 monooxygenase adrA catalyzes two sequential oxidation reactions of the C-23 methyl group, to generate the corresponding alcohol andrastin B, and aldehyde andrastin A. The sequence is that of Prenytransferase adrG from Penicillium rubens (strain ATCC 28089 / DSM 1075 / NRRL 1951 / Wisconsin 54-1255) (Penicillium chrysogenum).